A 181-amino-acid polypeptide reads, in one-letter code: Isopentenyl-diphosphate Delta-isomerase (181 aa).

Mn(2+)-binding residues include H29 and H36. The Nudix hydrolase domain occupies 34–167 (PLHLAFSCYL…GWAISPWAAE (134 aa)). C71 is a catalytic residue. Residue H73 coordinates Mn(2+). Position 91 (E91) interacts with Mg(2+). Residues E118 and E120 each contribute to the Mn(2+) site. E120 is a catalytic residue.

This sequence belongs to the IPP isomerase type 1 family. Requires Mg(2+) as cofactor. It depends on Mn(2+) as a cofactor.

It is found in the cytoplasm. It carries out the reaction isopentenyl diphosphate = dimethylallyl diphosphate. The protein operates within isoprenoid biosynthesis; dimethylallyl diphosphate biosynthesis; dimethylallyl diphosphate from isopentenyl diphosphate: step 1/1. Catalyzes the 1,3-allylic rearrangement of the homoallylic substrate isopentenyl (IPP) to its highly electrophilic allylic isomer, dimethylallyl diphosphate (DMAPP). The sequence is that of Isopentenyl-diphosphate Delta-isomerase from Mycolicibacterium vanbaalenii (strain DSM 7251 / JCM 13017 / BCRC 16820 / KCTC 9966 / NRRL B-24157 / PYR-1) (Mycobacterium vanbaalenii).